Here is a 579-residue protein sequence, read N- to C-terminus: UPF0324 membrane protein DVU_2133 (579 aa).

The next 11 membrane-spanning stretches (helical) occupy residues 26-45, 193-215, 225-243, 250-272, 305-327, 369-391, 401-423, 436-456, 476-495, 515-534, and 549-571; these read YWAI…LFLA, PFNI…AVGM, FLVG…LMMG, YWGI…TVGT, IGIP…TFIF, LTLA…PAFI, GGAW…AFLG, IQNV…CARV, FVLG…GSLG, LRNW…TNFR, and YVAG…FYIV.

Belongs to the UPF0324 family.

Its subcellular location is the cell membrane. In Nitratidesulfovibrio vulgaris (strain ATCC 29579 / DSM 644 / CCUG 34227 / NCIMB 8303 / VKM B-1760 / Hildenborough) (Desulfovibrio vulgaris), this protein is UPF0324 membrane protein DVU_2133.